Here is a 1997-residue protein sequence, read N- to C-terminus: Receptor-type tyrosine-protein phosphatase beta (1997 aa).

The first 22 residues, 1–22 (MLSHGAGLALWITLSLLQTGLA), serve as a signal peptide directing secretion. Fibronectin type-III domains lie at 23-111 (EPER…TDPL), 112-207 (PPAR…SPVK), 203-288 (PSPV…VRTA), 291-378 (EVSN…TFPD), 379-471 (KVAN…LAVL), 467-552 (PLAV…KGRT), 556-641 (QVTD…EGRT), 642-729 (VPSS…QERT), 730-829 (VPDK…TLRN), 819-906 (PEPV…GFTV), 909-1001 (AVKN…VQGV), 995-1083 (PASV…EGRT), 1087-1175 (AVTD…VPAS), 1173-1260 (PASV…SRTA), 1260-1356 (APSP…TKPD), 1357-1448 (KIQN…IDRP), and 1458-1554 (NEKD…EMES). Over 23 to 1621 (EPERCNFTLA…ESEPLFGAIE (1599 aa)) the chain is Extracellular. 16 N-linked (GlcNAc...) asparagine glycosylation sites follow: N28, N53, N75, N172, N198, N267, N321, N414, N421, N479, N544, N574, N598, N652, N721, and N829. Residues N1040, N1096, N1163, N1185, N1212, N1274, N1367, N1470, N1474, and N1518 are each glycosylated (N-linked (GlcNAc...) asparagine). A helical transmembrane segment spans residues 1622–1642 (GVSAGLFLIGMLVAVVALLIC). Residues 1643 to 1997 (RQKVSHGRER…YHRDPVYSRH (355 aa)) lie on the Cytoplasmic side of the membrane. One can recognise a Tyrosine-protein phosphatase domain in the interval 1703–1963 (LSKEYEELKD…VYLHQCVRDV (261 aa)). Residues D1870, 1904–1910 (CSAGVGR), and Q1948 contribute to the substrate site. Residue C1904 is the Phosphocysteine intermediate of the active site. The residue at position 1981 (Y1981) is a Phosphotyrosine.

The protein belongs to the protein-tyrosine phosphatase family. Receptor class 3 subfamily. As to quaternary structure, monomer. Interacts with TEK. Interacts via fibronectin type-III 17 domain with CDH5. Detected in a complex with CNTN1 and NRCAM. Interacts (phosphorylated form) with FYN and GRB2. Interacts with IGFBP2.

It localises to the membrane. The catalysed reaction is O-phospho-L-tyrosyl-[protein] + H2O = L-tyrosyl-[protein] + phosphate. Plays an important role in blood vessel remodeling and angiogenesis. Not necessary for the initial formation of blood vessels, but is essential for their maintenance and remodeling. Can induce dephosphorylation of TEK/TIE2, CDH5/VE-cadherin and KDR/VEGFR-2. Regulates angiopoietin-TIE2 signaling in endothelial cells. Acts as a negative regulator of TIE2, and controls TIE2 driven endothelial cell proliferation, which in turn affects blood vessel remodeling during embryonic development and determines blood vessel size during perinatal growth. Essential for the maintenance of endothelial cell contact integrity and for the adhesive function of VE-cadherin in endothelial cells and this requires the presence of plakoglobin. The polypeptide is Receptor-type tyrosine-protein phosphatase beta (PTPRB) (Homo sapiens (Human)).